Consider the following 397-residue polypeptide: Elongation factor Tu-2 (397 aa).

The 197-residue stretch at 10 to 206 folds into the tr-type G domain; sequence KPHVNIGTIG…AVDEFVPEPV (197 aa). The G1 stretch occupies residues 19-26; sequence GHIDHGKT. Position 19–26 (19–26) interacts with GTP; it reads GHIDHGKT. Thr-26 provides a ligand contact to Mg(2+). The G2 stretch occupies residues 62–66; the sequence is GITIS. Residues 83-86 form a G3 region; sequence DCPG. Residues 83-87 and 138-141 each bind GTP; these read DCPGH and NKTD. The tract at residues 138 to 141 is G4; it reads NKTD. Positions 176–178 are G5; it reads SAL.

This sequence belongs to the TRAFAC class translation factor GTPase superfamily. Classic translation factor GTPase family. EF-Tu/EF-1A subfamily. Monomer.

The protein resides in the cytoplasm. It carries out the reaction GTP + H2O = GDP + phosphate + H(+). Its function is as follows. GTP hydrolase that promotes the GTP-dependent binding of aminoacyl-tRNA to the A-site of ribosomes during protein biosynthesis. The protein is Elongation factor Tu-2 of Streptomyces ramocissimus.